A 515-amino-acid polypeptide reads, in one-letter code: 2-isopropylmalate synthase (515 aa).

The region spanning 4-266 (IKIFDTTLRD…ETGLILKETK (263 aa)) is the Pyruvate carboxyltransferase domain. Mn(2+) contacts are provided by Asp13, His201, His203, and Asn237. The interval 392–515 (KLIQFGVSYD…ANLTRLVYES (124 aa)) is regulatory domain.

It belongs to the alpha-IPM synthase/homocitrate synthase family. LeuA type 1 subfamily. As to quaternary structure, homodimer. It depends on Mn(2+) as a cofactor.

Its subcellular location is the cytoplasm. The enzyme catalyses 3-methyl-2-oxobutanoate + acetyl-CoA + H2O = (2S)-2-isopropylmalate + CoA + H(+). It participates in amino-acid biosynthesis; L-leucine biosynthesis; L-leucine from 3-methyl-2-oxobutanoate: step 1/4. Functionally, catalyzes the condensation of the acetyl group of acetyl-CoA with 3-methyl-2-oxobutanoate (2-ketoisovalerate) to form 3-carboxy-3-hydroxy-4-methylpentanoate (2-isopropylmalate). This chain is 2-isopropylmalate synthase, found in Oceanobacillus iheyensis (strain DSM 14371 / CIP 107618 / JCM 11309 / KCTC 3954 / HTE831).